A 140-amino-acid polypeptide reads, in one-letter code: Large ribosomal subunit protein uL11 (140 aa).

Belongs to the universal ribosomal protein uL11 family. Part of the ribosomal stalk of the 50S ribosomal subunit. Interacts with L10 and the large rRNA to form the base of the stalk. L10 forms an elongated spine to which L12 dimers bind in a sequential fashion forming a multimeric L10(L12)X complex. One or more lysine residues are methylated.

Its function is as follows. Forms part of the ribosomal stalk which helps the ribosome interact with GTP-bound translation factors. This is Large ribosomal subunit protein uL11 from Lawsonia intracellularis (strain PHE/MN1-00).